We begin with the raw amino-acid sequence, 404 residues long: Subtilisin-like proteinase Mp1 (404 aa).

An N-terminal signal peptide occupies residues 1–19 (MVGFKTLALHLAAVLPALA). Residues 20–112 (APVDKQATQV…VEPDQVWDLY (93 aa)) constitute a propeptide that is removed on maturation. The Inhibitor I9 domain maps to 33–111 (SYIITLKQGA…FVEPDQVWDL (79 aa)). Residues 121–404 (PWGLGSISHR…NLIAFNGVTA (284 aa)) form the Peptidase S8 domain. Asparagine 133 carries an N-linked (GlcNAc...) asparagine glycan. Residues aspartate 154, histidine 186, and serine 347 each act as charge relay system in the active site.

Belongs to the peptidase S8 family.

The protein localises to the secreted. This Magnaporthiopsis poae (Kentucky bluegrass fungus) protein is Subtilisin-like proteinase Mp1.